Here is a 269-residue protein sequence, read N- to C-terminus: Ribonuclease HII (269 aa).

Residues 83 to 269 form the RNase H type-2 domain; sequence YLIAGVDEVG…HRMSFLTNIL (187 aa). Aspartate 89, glutamate 90, and aspartate 185 together coordinate a divalent metal cation.

It belongs to the RNase HII family. It depends on Mn(2+) as a cofactor. Requires Mg(2+) as cofactor.

The protein localises to the cytoplasm. It carries out the reaction Endonucleolytic cleavage to 5'-phosphomonoester.. Functionally, endonuclease that specifically degrades the RNA of RNA-DNA hybrids. This chain is Ribonuclease HII, found in Clostridium botulinum (strain ATCC 19397 / Type A).